Consider the following 308-residue polypeptide: uncharacterized protein (308 aa).

2 stretches are compositionally biased toward polar residues: residues 138-148 and 205-229; these read WSFTKHGSNTP and STSHLNHPSTSNSPDPLYSASQPPS. Disordered stretches follow at residues 138 to 157 and 205 to 235; these read WSFTKHGSNTPSDSSSPLCN and STSHLNHPSTSNSPDPLYSASQPPSIKTDAS.

It localises to the cytoplasm. This is an uncharacterized protein from Schizosaccharomyces pombe (strain 972 / ATCC 24843) (Fission yeast).